The primary structure comprises 1168 residues: TBC1 domain family member 1 (1168 aa).

Ser146 bears the Phosphoserine mark. The segment at 203-238 (VSGSRGSESPRPNPPHAAPTGSQEPVRRPMRKSFSQ) is disordered. Ser235 carries the post-translational modification Phosphoserine; by PKB/AKT1. Phosphoserine is present on Ser237. Positions 246–404 (FRKELQDGGL…LHKLCERIEG (159 aa)) constitute a PID domain. At Ser503 the chain carries Phosphoserine. Thr505 is modified (phosphothreonine; by PKB/AKT1). Residues Ser507, Ser525, and Ser527 each carry the phosphoserine modification. A compositionally biased stretch (low complexity) spans 532–542 (SSLSSTLSNTS). Disordered stretches follow at residues 532–551 (SSLS…CEKE) and 564–587 (GSSE…LSPQ). 5 positions are modified to phosphoserine: Ser565, Ser566, Ser570, Ser571, and Ser585. Residue Thr596 is modified to Phosphothreonine. Residue Ser614 is modified to Phosphoserine. Ser627 is subject to Phosphoserine; by PKB/AKT1. 2 disordered regions span residues 628 to 658 (VSTE…KTRR) and 678 to 717 (SSSR…KRTS). Residues 632 to 645 (TPHERKDFESKANH) are compositionally biased toward basic and acidic residues. A phosphoserine mark is found at Ser695 and Ser941. The 195-residue stretch at 800–994 (GVPRHHRGEI…RVFDMIFLQG (195 aa)) folds into the Rab-GAP TBC domain. Tyr952 is subject to Phosphotyrosine. The residue at position 1131 (Thr1131) is a Phosphothreonine. Residues 1145 to 1159 (ELRRRSAEPSDREPE) are compositionally biased toward basic and acidic residues. The interval 1145-1168 (ELRRRSAEPSDREPECTQPEPTGD) is disordered.

In terms of assembly, interacts with APPL2 (via BAR domain); interaction is dependent of TBC1D1 phosphorylation at Ser-235; interaction diminishes the phosphorylation of TBC1D1 at Thr-596, resulting in inhibition of SLC2A4/GLUT4 translocation and glucose uptake. Post-translationally, insulin-stimulated phosphorylation by AKT family kinases stimulates SLC2A4/GLUT4 translocation.

The protein resides in the nucleus. In terms of biological role, may act as a GTPase-activating protein for Rab family protein(s). May play a role in the cell cycle and differentiation of various tissues. Involved in the trafficking and translocation of GLUT4-containing vesicles and insulin-stimulated glucose uptake into cells. In Homo sapiens (Human), this protein is TBC1 domain family member 1 (TBC1D1).